The chain runs to 171 residues: Protein TIFY 11d (171 aa).

Residues 65–100 (PSAGTAPLTIFYDGRMVVVDDVPAEKAAELMRLAGS) form the Tify domain. The Jas signature appears at 117–142 (PIARKASLQRFLQKRKHRITTTSEPY). Residues 119–126 (ARKASLQR) carry the Nuclear localization signal motif.

This sequence belongs to the TIFY/JAZ family. In terms of assembly, interacts with BHLH148 and COI1A. Interacts with COI1A, COI1B and COI2 in a coronatine-dependent manner. Coronatine is an analog of jasmonoyl isoleucine (JA-Ile). Ubiquitinated. Increase in jasmonoyl isoleucine (JA-Ile) levels mediates its degradation via COI1A-mediated proteasome pathway.

The protein resides in the nucleus. In terms of biological role, repressor of jasmonate (JA) responses. May act on an initial response of JA-regulated gene expression toward drought tolerance as part of a BHLH148-TIFY11D/JAZ12-COI1A complex. This chain is Protein TIFY 11d, found in Oryza sativa subsp. indica (Rice).